The sequence spans 37 residues: Large ribosomal subunit protein bL36 (37 aa).

Belongs to the bacterial ribosomal protein bL36 family.

The protein is Large ribosomal subunit protein bL36 of Treponema denticola (strain ATCC 35405 / DSM 14222 / CIP 103919 / JCM 8153 / KCTC 15104).